Here is an 801-residue protein sequence, read N- to C-terminus: MDEDEFELQPQEPNSFFDGIGADATHMDGDQIVVEIQEAVFVSNIVDSDIAVHNFVPDDPDSVVIQDVIEDVVIEEDVQCSDILEEADVSENVIIPEQVLDSDVTEEVSLPHCTVPDDVLASDITSTSMSMPEHVLTSESMHVCDIEHVEHMVHDSVVEAEIITDPLTSDIVSEEVLVADCAPEAIIDASGISVDQQDNDKASCEDYLMISLDDAGKIEHDGSTGVTIDAESEMDPCKVDSTCPEVIKVYIFKADPGEDDLGGTVDIVESEPENDHGVELLDQNSSIRVPREKMVYMTVNDSQQEDEDLNVAEIADEVYMEVIVGEEDAAVAAAAAAVHEQQIDEDEMKTFVPIAWAAAYGNNSDGIENRNGTASALLHIDESAGLGRLAKQKPKKKRRPDSRQYQTAIIIGPDGHPLTVYPCMICGKKFKSRGFLKRHMKNHPEHLAKKKYHCTDCDYTTNKKISLHNHLESHKLTSKAEKAIECDECGKHFSHAGALFTHKMVHKEKGANKMHKCKFCEYETAEQGLLNRHLLAVHSKNFPHICVECGKGFRHPSELKKHMRIHTGEKPYQCQYCEYRSADSSNLKTHIKTKHSKEMPLKCDICLLTFSDTKEVQQHTLVHQESKTHQCLHCDHKSSNSSDLKRHVISVHTKDYPHKCEMCEKGFHRPSELKKHVAVHKGKKMHQCRHCDFKIADPFVLSRHILSVHTKDLPFRCKRCRKGFRQQNELKKHMKTHSGRKVYQCEYCEYSTTDASGFKRHVISIHTKDYPHRCEYCKKGFRRPSEKNQHIMRHHKEVGLP.

At Ser270 the chain carries Phosphoserine. The C2H2-type 1 zinc-finger motif lies at 421 to 443; that stretch reads YPCMICGKKFKSRGFLKRHMKNH. Residues 452 to 474 form a C2H2-type 2; atypical zinc finger; sequence YHCTDCDYTTNKKISLHNHLESH. 11 C2H2-type zinc fingers span residues 484 to 506, 515 to 538, 544 to 566, 572 to 595, 601 to 623, 629 to 652, 658 to 680, 686 to 709, 715 to 737, 743 to 766, and 772 to 795; these read IECD…KMVH, HKCK…LAVH, HICV…MRIH, YQCQ…KTKH, LKCD…TLVH, HQCL…ISVH, HKCE…VAVH, HQCR…LSVH, FRCK…MKTH, YQCE…ISIH, and HRCE…MRHH.

The protein belongs to the krueppel C2H2-type zinc-finger protein family. ZFX/ZFY subfamily.

The protein localises to the nucleus. Probable transcriptional activator. Binds to the consensus sequence 5'-AGGCCY-3'. In Pan troglodytes (Chimpanzee), this protein is Zinc finger Y-chromosomal protein (ZFY).